Here is a 525-residue protein sequence, read N- to C-terminus: tRNA-2-methylthio-N(6)-dimethylallyladenosine synthase (525 aa).

The 117-residue stretch at 14–130 folds into the MTTase N-terminal domain; it reads RTYQVRTYGC…LPTLLERARH (117 aa). Residues Cys-23, Cys-59, Cys-93, Cys-167, Cys-171, and Cys-174 each contribute to the [4Fe-4S] cluster site. The region spanning 153–400 is the Radical SAM core domain; the sequence is RESAYAGWVS…IELQERISLE (248 aa). Residues 403–482 form the TRAM domain; sequence QAQVGRTLEL…PHHLIADGAL (80 aa).

It belongs to the methylthiotransferase family. MiaB subfamily. Monomer. Requires [4Fe-4S] cluster as cofactor.

Its subcellular location is the cytoplasm. It catalyses the reaction N(6)-dimethylallyladenosine(37) in tRNA + (sulfur carrier)-SH + AH2 + 2 S-adenosyl-L-methionine = 2-methylsulfanyl-N(6)-dimethylallyladenosine(37) in tRNA + (sulfur carrier)-H + 5'-deoxyadenosine + L-methionine + A + S-adenosyl-L-homocysteine + 2 H(+). Catalyzes the methylthiolation of N6-(dimethylallyl)adenosine (i(6)A), leading to the formation of 2-methylthio-N6-(dimethylallyl)adenosine (ms(2)i(6)A) at position 37 in tRNAs that read codons beginning with uridine. This is tRNA-2-methylthio-N(6)-dimethylallyladenosine synthase from Mycobacterium sp. (strain MCS).